A 129-amino-acid polypeptide reads, in one-letter code: Small ribosomal subunit protein uS11 (129 aa).

Belongs to the universal ribosomal protein uS11 family. As to quaternary structure, part of the 30S ribosomal subunit. Interacts with proteins S7 and S18. Binds to IF-3.

Functionally, located on the platform of the 30S subunit, it bridges several disparate RNA helices of the 16S rRNA. Forms part of the Shine-Dalgarno cleft in the 70S ribosome. The protein is Small ribosomal subunit protein uS11 of Geobacillus stearothermophilus (Bacillus stearothermophilus).